Consider the following 302-residue polypeptide: Urease accessory protein UreD 2 (302 aa).

This sequence belongs to the UreD family. In terms of assembly, ureD, UreF and UreG form a complex that acts as a GTP-hydrolysis-dependent molecular chaperone, activating the urease apoprotein by helping to assemble the nickel containing metallocenter of UreC. The UreE protein probably delivers the nickel.

The protein localises to the cytoplasm. Required for maturation of urease via the functional incorporation of the urease nickel metallocenter. The chain is Urease accessory protein UreD 2 from Brucella canis (strain ATCC 23365 / NCTC 10854 / RM-666).